A 371-amino-acid chain; its full sequence is MLCLGIETSCDETAVALFENGRPVLEKLASQADLHAVFGGVVPELASREHLRRLGPLLQALFAASGRSLADVDAIAVARGPGLLGSLLVGLAAAKGLSLATGKPLIGVDHLHAHLLAATIGRDVAFPALGLLVSGGHTQIVRLESALSLEVLGRTLDDAAGEAFDKAAKSFNLPYPGGVYIDVLGRGIAPDKTLFPRPFLDNDHFDFSFSGLKTAVASYAAAHPELRAGSLAEAGGAIDPEAWPMALRRACSSLNFAIAETLRIKFERALDRQPGPPASLIAAGGVAANGPIRAMLADLAARRGLPLYLPEPALCADNAVMIAAAGSRLAEAGYAHDLALTAVPRGRKVPWDYAGGPSGKAASVDSASPAQ.

Residues H110 and H114 each contribute to the Fe cation site. Substrate contacts are provided by residues 132-136 (LVSGG), D165, G178, D182, and N289. Residue D317 participates in Fe cation binding.

It belongs to the KAE1 / TsaD family. Fe(2+) serves as cofactor.

The protein localises to the cytoplasm. The catalysed reaction is L-threonylcarbamoyladenylate + adenosine(37) in tRNA = N(6)-L-threonylcarbamoyladenosine(37) in tRNA + AMP + H(+). Required for the formation of a threonylcarbamoyl group on adenosine at position 37 (t(6)A37) in tRNAs that read codons beginning with adenine. Is involved in the transfer of the threonylcarbamoyl moiety of threonylcarbamoyl-AMP (TC-AMP) to the N6 group of A37, together with TsaE and TsaB. TsaD likely plays a direct catalytic role in this reaction. The polypeptide is tRNA N6-adenosine threonylcarbamoyltransferase (Solidesulfovibrio magneticus (strain ATCC 700980 / DSM 13731 / RS-1) (Desulfovibrio magneticus)).